A 715-amino-acid chain; its full sequence is KIAVERDPVKTSFEKWAQPGHFSRTLAKGPSTTTWIWNLHADAHDFDSHTNDLEDISRKVFSAHFGQLAIIFIWLSGMYFHGARFSNYEAWLSDPTHVKPSAQVVWPIVGQEILNGDVGGGFQGIQITSGFFQIWRASGITSELQLYSTAIGGLIFAALMLFAGWFHYHKAAPKLTWFQDVESMLNHHLAGLLGLGSLSWAGHQVHVSLPINQLLDAGVDAKEIPLPHEFILNRDLMTQLYPSFAKGLTPFFTLNWSEYSDFSTFRGGLNPVTGGLWLTDTVHHHLAIAVLFLIAGHMYRTNWGIGHSLKEILEAHKGPFTGEGHKGLYEIFTTSWHAQLALNLAMLGSLTIIVAHHMYSMPPYPYLATDYGTQLSLFTHHMWIGGFLVVGAAAHAAIFMVRDYDPTTQYNNLLDRVLRHRDAIISHLNWACIFLGFHSFGLYIHNDTMSALGRPQDMFSDTAIQLQPVFAQWVQNTHAVAPFSTAPNAAASTSLTWGGIDLVAVGGKVALLPIPLGTADFLVHHIHAFTIHVTVLILLKGVLFARSSRLIPDKANLGFRFPCDGPGRGGTCQVSAWDHVFLGLFWMYNAISVVIFHFSWKMQSDVWGSVSDQKIVTHITGGNFAQSSITINGWLRDFLWAQASQVIQSYGSSLSAYGLLFLGAHFVWAFSLMFLFSGRGYWQELIESIVWAHNKLKVAPAIQPRALSIVQGRAE.

8 helical membrane-spanning segments follow: residues 60 to 83, 146 to 169, 185 to 209, 281 to 299, 336 to 359, 375 to 401, 423 to 445, and 521 to 539; these read VFSAHFGQLAIIFIWLSGMYFHGA, LYSTAIGGLIFAALMLFAGWFHYH, LNHHLAGLLGLGSLSWAGHQVHVSL, TVHHHLAIAVLFLIAGHMY, WHAQLALNLAMLGSLTIIVAHHMY, LSLFTHHMWIGGFLVVGAAAHAAIFMV, AIISHLNWACIFLGFHSFGLYIH, and FLVHHIHAFTIHVTVLILL. [4Fe-4S] cluster contacts are provided by Cys563 and Cys572. The next 2 membrane-spanning stretches (helical) occupy residues 579-600 and 654-676; these read HVFLGLFWMYNAISVVIFHFSW and LSAYGLLFLGAHFVWAFSLMFLF. His665 provides a ligand contact to chlorophyll a'. Chlorophyll a contacts are provided by Met673 and Tyr681. Position 682 (Trp682) interacts with phylloquinone. The helical transmembrane segment at 714-715 threads the bilayer; that stretch reads AE.

It belongs to the PsaA/PsaB family. As to quaternary structure, the PsaA/B heterodimer binds the P700 chlorophyll special pair and subsequent electron acceptors. PSI consists of a core antenna complex that captures photons, and an electron transfer chain that converts photonic excitation into a charge separation. The eukaryotic PSI reaction center is composed of at least 11 subunits. P700 is a chlorophyll a/chlorophyll a' dimer, A0 is one or more chlorophyll a, A1 is one or both phylloquinones and FX is a shared 4Fe-4S iron-sulfur center. is required as a cofactor.

The protein resides in the plastid. It is found in the chloroplast thylakoid membrane. It catalyses the reaction reduced [plastocyanin] + hnu + oxidized [2Fe-2S]-[ferredoxin] = oxidized [plastocyanin] + reduced [2Fe-2S]-[ferredoxin]. PsaA and PsaB bind P700, the primary electron donor of photosystem I (PSI), as well as the electron acceptors A0, A1 and FX. PSI is a plastocyanin-ferredoxin oxidoreductase, converting photonic excitation into a charge separation, which transfers an electron from the donor P700 chlorophyll pair to the spectroscopically characterized acceptors A0, A1, FX, FA and FB in turn. Oxidized P700 is reduced on the lumenal side of the thylakoid membrane by plastocyanin. This chain is Photosystem I P700 chlorophyll a apoprotein A1, found in Phlegmariurus squarrosus (Rock tassel fern).